Here is a 310-residue protein sequence, read N- to C-terminus: MSKKIINEVIDILEDKKYTYTMIEYPEHNRKSVDIVLNSKEPTLIRVSEDKVTKEEISDLKKIAVSTLTASLVVTNEEEEDIVSVKADNVFAVSPEGFKKVINGEKIFLYRTRGGIFIKIRNYILKHKREEMGYSIGDVAKFLGVSRKAIYDYEKGDSDVSLEVAEKLIDLFGDDIIGDVIWDSIKGKKEVIKEDITEFSPESFKSKLIYKLKENGLNILSLKLTAADLIVKDNENNRYLVTIENKDYNKSMKKFYEAKKLASYTKSELLIIIRTSKMLKECEDLGYKTYEENDIHSLIDEIKGSNGRQS.

The 56-residue stretch at 125–180 (LKHKREEMGYSIGDVAKFLGVSRKAIYDYEKGDSDVSLEVAEKLIDLFGDDIIGDV) folds into the HTH cro/C1-type domain. Positions 136–155 (IGDVAKFLGVSRKAIYDYEK) form a DNA-binding region, H-T-H motif.

The chain is Putative HTH-type transcriptional regulatory protein LS215_1371 from Saccharolobus islandicus (strain L.S.2.15 / Lassen #1) (Sulfolobus islandicus).